The primary structure comprises 569 residues: Urease subunit beta (569 aa).

The region spanning G131–F569 is the Urease domain. Ni(2+) contacts are provided by H136, H138, and K219. The residue at position 219 (K219) is an N6-carboxylysine. H221 lines the substrate pocket. Residues H248 and H274 each coordinate Ni(2+). H322 (proton donor) is an active-site residue. Position 362 (D362) interacts with Ni(2+).

It belongs to the metallo-dependent hydrolases superfamily. Urease alpha subunit family. In terms of assembly, heterohexamer of 3 UreA (alpha) and 3 UreB (beta) subunits. Requires Ni cation as cofactor. In terms of processing, carboxylation allows a single lysine to coordinate two nickel ions.

Its subcellular location is the cytoplasm. The catalysed reaction is urea + 2 H2O + H(+) = hydrogencarbonate + 2 NH4(+). The protein operates within nitrogen metabolism; urea degradation; CO(2) and NH(3) from urea (urease route): step 1/1. The protein is Urease subunit beta of Helicobacter pylori (strain HPAG1).